The primary structure comprises 329 residues: GTP 3',8-cyclase (329 aa).

The region spanning Ala-8–Ala-234 is the Radical SAM core domain. Arg-17 is a binding site for GTP. The [4Fe-4S] cluster site is built by Cys-24 and Cys-28. Residue Tyr-30 coordinates S-adenosyl-L-methionine. [4Fe-4S] cluster is bound at residue Cys-31. A GTP-binding site is contributed by Arg-68. Gly-72 is an S-adenosyl-L-methionine binding site. Residue Thr-99 coordinates GTP. Ser-123 lines the S-adenosyl-L-methionine pocket. A GTP-binding site is contributed by Lys-160. Met-194 is a binding site for S-adenosyl-L-methionine. The [4Fe-4S] cluster site is built by Cys-257 and Cys-260. Residue Arg-262–Arg-264 coordinates GTP. [4Fe-4S] cluster is bound at residue Cys-274.

Belongs to the radical SAM superfamily. MoaA family. As to quaternary structure, monomer and homodimer. It depends on [4Fe-4S] cluster as a cofactor.

The catalysed reaction is GTP + AH2 + S-adenosyl-L-methionine = (8S)-3',8-cyclo-7,8-dihydroguanosine 5'-triphosphate + 5'-deoxyadenosine + L-methionine + A + H(+). It functions in the pathway cofactor biosynthesis; molybdopterin biosynthesis. Catalyzes the cyclization of GTP to (8S)-3',8-cyclo-7,8-dihydroguanosine 5'-triphosphate. The protein is GTP 3',8-cyclase of Escherichia coli O7:K1 (strain IAI39 / ExPEC).